A 204-amino-acid chain; its full sequence is Large ribosomal subunit protein eL15 (204 aa).

Belongs to the eukaryotic ribosomal protein eL15 family. Component of the large ribosomal subunit.

Its subcellular location is the cytoplasm. Its function is as follows. Component of the large ribosomal subunit. The ribosome is a large ribonucleoprotein complex responsible for the synthesis of proteins in the cell. This chain is Large ribosomal subunit protein eL15 (rpl15), found in Cyprinus carpio (Common carp).